Here is a 274-residue protein sequence, read N- to C-terminus: MGSSPAPFADIGKKAKDLLNKDYIFDHKFTLTMLSATGTEFVATGLKKDDFFFGDISTLYKGQNTIVDLKIDSHSSVSTKVTLKNLLPSAKAVISFKIPDHKSGKLDVQYVHPHATLNSSIGLNPTPLLDLSATIGSQNVCLGGEVSFDTASSSLTKYNAGIGFNNQGVSAALILEDKGESLRATYVHTVNPTTSFGAELIRRFSNYNNSFTVGSSHSVDQFTVVKTRFSNSGKAGMVVQREWRPKSHITFSAEYDSKAVTSSPKLGLALALKP.

At glycine 2 the chain carries N-acetylglycine. Residue serine 76 is modified to Phosphoserine.

This sequence belongs to the eukaryotic mitochondrial porin (TC 1.B.8.1) family. Widely expressed.

It localises to the cell membrane. Its subcellular location is the mitochondrion outer membrane. Functionally, forms a channel through the mitochondrial outer membrane that allows diffusion of small hydrophilic molecules. The channel adopts an open conformation at low or zero membrane potential and a closed conformation at potentials above 30-40 mV. The open state has a weak anion selectivity whereas the closed state is cation-selective. Involved in plant growth and development at the vegetative and reproductive stages. Is important for leaf and pollen development and mitochondrial membrane potential steady state. May be involved in disease resistance. The protein is Mitochondrial outer membrane protein porin 4 (VDAC4) of Arabidopsis thaliana (Mouse-ear cress).